The chain runs to 463 residues: Stress-activated protein kinase jnk-1 (463 aa).

Over residues 1–12 (MEERLSTTSSYP) the composition is skewed to polar residues. The tract at residues 1–23 (MEERLSTTSSYPSHPGRSVEEDH) is disordered. One can recognise a Protein kinase domain in the interval 119–412 (YQNLRLIGSG…ISVDDALRHP (294 aa)). Residues 126 to 131 (GSGAQG) and Lys-148 contribute to the ATP site. Catalysis depends on Asp-244, which acts as the Proton acceptor. Phosphothreonine is present on Thr-276. Residues 276-278 (TPY) carry the TXY motif. Tyr-278 carries the post-translational modification Phosphotyrosine.

It belongs to the protein kinase superfamily. CMGC Ser/Thr protein kinase family. MAP kinase subfamily. As to quaternary structure, binds to the scaffolding protein, unc-16. Unc-16 also binds other components of the JNK signaling pathway. Interacts with daf-16. The cofactor is Mg(2+). Post-translationally, dually phosphorylated on Thr-276 and Tyr-278, which activates the enzyme. In terms of tissue distribution, expressed in most neurons, including nerve ring, head ganglions, dorsal and ventral nerve cords and tail ganglions. The Thr-276/Tyr-278 phosphorylated form is present in the nerve ring upon heat exposure.

Its subcellular location is the cytoplasm. It is found in the perikaryon. The protein resides in the cell projection. It localises to the axon. The catalysed reaction is L-seryl-[protein] + ATP = O-phospho-L-seryl-[protein] + ADP + H(+). It catalyses the reaction L-threonyl-[protein] + ATP = O-phospho-L-threonyl-[protein] + ADP + H(+). Activated by threonine and tyrosine phosphorylation by either of the dual specificity kinases, jkk-1 and mek-1. Functionally, serine/threonine-protein kinase which responds to activation by environmental stress by phosphorylating a number of transcription factors such as daf-16, and thus regulates transcriptional activity. By phosphorylating daf-16, plays a role in daf-16 nuclear translocation in intestinal cells in response to environmental stresses such as heat and oxidative stresses. Downstream of jkk-1, may coordinate locomotion via type-D GABAergic motoneurons and regulates synaptic vesicle transport in conjunction with unc-16. Independently of jkk-1, may regulate some mechanosensory responses, such as response to touch. Independently of jkk-1 and downstream of mek-1, plays a role in resistance to heavy metals, such as Cu(2+) or Cd(2+). Regulates germline cell apoptosis in response to heavy metals such as Cu(2+) and arsenite. Required for dopaminergic CEP neuron degeneration in response to Mn(2+). Required for normal sleep bout quantity and arousal thresholds during the transition from the last larval stage to adulthood in well-fed animals. Downstream of jkk-1 but independently of mek-1, positively regulates lifespan. The protein is Stress-activated protein kinase jnk-1 (jnk-1) of Caenorhabditis elegans.